We begin with the raw amino-acid sequence, 497 residues long: Cobyric acid synthase (497 aa).

A GATase cobBQ-type domain is found at 257 to 431 (WLRVAAVRLP…WHGLLDNDDF (175 aa)). Cys-338 functions as the Nucleophile in the catalytic mechanism. His-423 is an active-site residue.

The protein belongs to the CobB/CobQ family. CobQ subfamily.

The protein operates within cofactor biosynthesis; adenosylcobalamin biosynthesis. Functionally, catalyzes amidations at positions B, D, E, and G on adenosylcobyrinic A,C-diamide. NH(2) groups are provided by glutamine, and one molecule of ATP is hydrogenolyzed for each amidation. In Mycolicibacterium paratuberculosis (strain ATCC BAA-968 / K-10) (Mycobacterium paratuberculosis), this protein is Cobyric acid synthase.